The primary structure comprises 96 residues: Co-chaperonin GroES (96 aa).

This sequence belongs to the GroES chaperonin family. In terms of assembly, heptamer of 7 subunits arranged in a ring. Interacts with the chaperonin GroEL.

It is found in the cytoplasm. Functionally, together with the chaperonin GroEL, plays an essential role in assisting protein folding. The GroEL-GroES system forms a nano-cage that allows encapsulation of the non-native substrate proteins and provides a physical environment optimized to promote and accelerate protein folding. GroES binds to the apical surface of the GroEL ring, thereby capping the opening of the GroEL channel. The chain is Co-chaperonin GroES from Coxiella burnetii (strain Dugway 5J108-111).